The following is a 138-amino-acid chain: DNA-directed RNA polymerase II subunit 4 (138 aa).

The residue at position 2 (Ser2) is an N-acetylserine.

Belongs to the eukaryotic RPB4 RNA polymerase subunit family. In terms of assembly, component of the RNA polymerase II complex consisting of at least 12 subunits. Interacts with NRPB7.

It localises to the nucleus. In terms of biological role, DNA-dependent RNA polymerase catalyzes the transcription of DNA into RNA using the four ribonucleoside triphosphates as substrates. Second largest component of RNA polymerase II which synthesizes mRNA precursors and many functional non-coding RNAs. Proposed to contribute to the polymerase catalytic activity and forms the polymerase active center together with the largest subunit. Pol II is the central component of the basal RNA polymerase II transcription machinery. It is composed of mobile elements that move relative to each other. The polypeptide is DNA-directed RNA polymerase II subunit 4 (NRPB4) (Arabidopsis thaliana (Mouse-ear cress)).